The primary structure comprises 607 residues: Dopamine receptor 3 (607 aa).

Over 1–23 the chain is Extracellular; sequence MLAGQHHVTDIESPLMVVLWRVA. Residues 24–44 form a helical membrane-spanning segment; sequence AGVFLPLVPTMAVFGNVLVIM. At 45–58 the chain is on the cytoplasmic side; sequence SVFRERSLQTVTNM. A helical transmembrane segment spans residues 59 to 79; sequence LIVSLAVSDFMVAIGVMSFGV. Topologically, residues 80–96 are extracellular; that stretch reads YYEWNDFKWGLGSFFCH. The cysteines at positions 95 and 173 are disulfide-linked. The helical transmembrane segment at 97–117 threads the bilayer; it reads VYQALDVACSTASILNLLAIS. The Cytoplasmic segment spans residues 118 to 141; it reads LDRYIAIGHPISYAQYGARGGRAM. A helical transmembrane segment spans residues 142–162; it reads ISITIVWGVSVAVALPLLLGV. Over 163-182 the chain is Extracellular; sequence NPMEENDLQECELANPYFNM. A helical membrane pass occupies residues 183–203; the sequence is ISSIFSFFIPCIAMIILYTII. At 204–523 the chain is on the cytoplasmic side; that stretch reads FRRLRQRERA…TKQMRREHKA (320 aa). The tract at residues 402 to 435 is disordered; the sequence is VPSIQDEKKLSQKSNDLPFSHQNGTHKQKLLPNP. The segment covering 413–424 has biased composition (polar residues); sequence QKSNDLPFSHQN. Residues 524-544 form a helical membrane-spanning segment; that stretch reads TVTLAVVLAVFLFCWLPFFVL. At 545-558 the chain is on the extracellular side; the sequence is HLSNSICLIIDENS. The helical transmembrane segment at 559–579 threads the bilayer; sequence ACVGFLPLYLATWLGYLNSSL. Residues 580 to 607 are Cytoplasmic-facing; sequence NPLIYTVFDQRFRNAFRNILSCGIFKKR.

This sequence belongs to the G-protein coupled receptor 1 family. Expressed in the neurons of the head, ventral cord and tail with weak expression observed in body wall muscles and PVD neurons. In the ventral cord, expressed strongly in GABAergic neurons with weaker expression in cholinergic motor neurons. Expressed in cholinergic SIA neurons and octopaminergic RIC neurons. In males, expressed in the dorsal and ventral spicule protractor and retractor muscles, and the sensory post-cloacal sensilla B (PCB) neuron. Expressed in the head acetylcholine neurons. Expressed in the AVA, AVB, AVD and AVE command interneurons. Expressed in premotor interneurons.

Its subcellular location is the cell membrane. Its function is as follows. G-protein coupled receptor which binds to the neurotransmitter dopamine with high affinity leading to the activation of an associated G-protein and downstream signaling pathways. Couples to G-proteins to inhibit adenylate cyclase (AC) activity and cAMP production. Antagonizes the D1-like dopamine receptor dop-1 to negatively regulate the rate of locomotion. Negatively regulates locomotion through the activation of goa-1 subunit proteins which inactivates the unc-77/nca-1 and nca-2 ion-channels in the command interneurons. Inhibits early-stage swimming by modulating the unc-77/nca-1 and nca-2 ion channels of premotor interneurons. In GABAergic, RIC, and SIA neurons, antagonizes the function of dop-1 to play a role in behavioral plasticity and regulate the decision-making process when conflicting alternatives are present. Antagonizes octopamine signaling in response to food by promoting the dopamine-mediated suppression of crh-1/CREB1 transcription factor activation in cholinergic SIA neurons. This is most likely in association with the G(o)-alpha G-protein subunit goa-1. Promotes male mating behavior by antagonizing acetylcholine signaling to control the protrusion of copulatory spicules from the tail of males during hermaphrodite vulval location. Under mitochondria stress, plays a role in bacterial preference, resulting in learned avoidance behavior. This is Dopamine receptor 3 from Caenorhabditis elegans.